The following is a 463-amino-acid chain: Glutamate--tRNA ligase 2 (463 aa).

The short motif at 10–20 is the 'HIGH' region element; it reads PSPTGFLHIGS. Residues 239–243 carry the 'KMSKS' region motif; that stretch reads KLSKR. Residue K242 coordinates ATP.

This sequence belongs to the class-I aminoacyl-tRNA synthetase family. Glutamate--tRNA ligase type 1 subfamily. In terms of assembly, monomer.

The protein resides in the cytoplasm. The catalysed reaction is tRNA(Glu) + L-glutamate + ATP = L-glutamyl-tRNA(Glu) + AMP + diphosphate. In terms of biological role, catalyzes the attachment of glutamate to tRNA(Glu) in a two-step reaction: glutamate is first activated by ATP to form Glu-AMP and then transferred to the acceptor end of tRNA(Glu). The chain is Glutamate--tRNA ligase 2 from Rickettsia felis (strain ATCC VR-1525 / URRWXCal2) (Rickettsia azadi).